The chain runs to 308 residues: UDP-N-acetylenolpyruvoylglucosamine reductase (308 aa).

The region spanning 22-185 (RVGGPADWLF…TEATFRAEAG (164 aa)) is the FAD-binding PCMH-type domain. Arginine 165 is an active-site residue. A compositionally biased stretch (basic and acidic residues) spans 197 to 211 (QIARRDSSQPTKERS). The disordered stretch occupies residues 197 to 228 (QIARRDSSQPTKERSAGSTFRNPAGFSSTGRA). Over residues 212-226 (AGSTFRNPAGFSSTG) the composition is skewed to polar residues. Serine 214 (proton donor) is an active-site residue. Glutamate 296 is an active-site residue.

The protein belongs to the MurB family. Requires FAD as cofactor.

It localises to the cytoplasm. It catalyses the reaction UDP-N-acetyl-alpha-D-muramate + NADP(+) = UDP-N-acetyl-3-O-(1-carboxyvinyl)-alpha-D-glucosamine + NADPH + H(+). Its pathway is cell wall biogenesis; peptidoglycan biosynthesis. Cell wall formation. This Cereibacter sphaeroides (strain ATCC 17023 / DSM 158 / JCM 6121 / CCUG 31486 / LMG 2827 / NBRC 12203 / NCIMB 8253 / ATH 2.4.1.) (Rhodobacter sphaeroides) protein is UDP-N-acetylenolpyruvoylglucosamine reductase.